Here is a 168-residue protein sequence, read N- to C-terminus: UPF0478 protein SH1183 (168 aa).

The chain crosses the membrane as a helical span at residues 7-27; sequence IAGIIAAIAFLVLCIGIVVVL. The interval 144-168 is disordered; the sequence is YRNTSVGNDANHSNENYTTNVEKNF.

Belongs to the UPF0478 family.

Its subcellular location is the cell membrane. The polypeptide is UPF0478 protein SH1183 (Staphylococcus haemolyticus (strain JCSC1435)).